Reading from the N-terminus, the 639-residue chain is Chaperone protein DnaK 1 (639 aa).

Phosphothreonine; by autocatalysis is present on Thr-199. The span at 603 to 612 (QQQAQAQQAP) shows a compositional bias: low complexity. A disordered region spans residues 603–639 (QQQAQAQQAPGGEGEQEAKQDDNVVDAEFEEVKDEKK). Residues 625 to 639 (NVVDAEFEEVKDEKK) show a composition bias toward acidic residues.

It belongs to the heat shock protein 70 family.

Its function is as follows. Acts as a chaperone. The sequence is that of Chaperone protein DnaK 1 from Photobacterium profundum (strain SS9).